Reading from the N-terminus, the 290-residue chain is UPF0761 membrane protein YihY (290 aa).

6 helical membrane-spanning segments follow: residues 44-64, 104-124, 140-160, 183-203, 210-230, and 244-264; these read LLSL…FPMF, VGAC…DSAL, FAVY…SLAI, IFPL…VPTI, AIVG…GFAL, and VLAV…IVLL.

This sequence belongs to the UPF0761 family.

Its subcellular location is the cell inner membrane. In Escherichia fergusonii (strain ATCC 35469 / DSM 13698 / CCUG 18766 / IAM 14443 / JCM 21226 / LMG 7866 / NBRC 102419 / NCTC 12128 / CDC 0568-73), this protein is UPF0761 membrane protein YihY.